Consider the following 219-residue polypeptide: Dehydration-responsive element-binding protein 1E (219 aa).

Over residues 1–19 (MEWAYYGSGYSSSGTPSPV) the composition is skewed to low complexity. The interval 1-44 (MEWAYYGSGYSSSGTPSPVGGDGDEDSYMTVSSAPPKRRAGRTK) is disordered. Residues 52 to 109 (VYKGVRSRNPGRWVCEVREPHGKQRIWLGTFETAEMAARAHDVAAMALRGRAACLNFA) constitute a DNA-binding region (AP2/ERF).

It belongs to the AP2/ERF transcription factor family. ERF subfamily.

It localises to the nucleus. In terms of biological role, transcriptional activator that binds specifically to the DNA sequence 5'-[AG]CCGAC-3'. Binding to the C-repeat/DRE element mediates high salinity- and dehydration-inducible transcription. The polypeptide is Dehydration-responsive element-binding protein 1E (DREB1E) (Oryza sativa subsp. indica (Rice)).